Reading from the N-terminus, the 479-residue chain is MNFELETLDLNGAAKEKCDALIVLLATSFKPGKDNLSILVAQALKAGDLESQSGKALVLYRPTGLACARAVLANVGEGSANEVSKAVKAAVLAVKAGNVKKLVICFAALPQEAPLRAAVTAAAEASYVFTTTKSKPEGRVIQRVVVAVSNSSGFKPVFDRAVAAVTGIEFAKEWANRPANHATPALLAGAARSLAKLANIKCEVLGPKQVERLGMGAFMAVAQGSEEPLRFIVLRYDGAQKSAAPTVLLGKGITFDSGGISIKPAADMDEMKFDMSGAASVLGVFLALAQLKPAINVIGLIPSCENLLDGRSVKPGDVVTSMSGQTIEILNTDAEGRLVLCDALTYAERFKPRAVVDIATLTGACVIALGGVRSGLFSADDQLAAALVSAGESSLDLCWRLPLDDDYAEGLKTSFADVANVAGRAGGAITAAKFLQRFAGKFPWAHLDIAGTAWKSGTAKGATGRPVALLLEYLLTSAK.

The Mn(2+) site is built by Lys-251 and Asp-256. Residue Lys-263 is part of the active site. Residues Asp-274, Asp-333, and Glu-335 each coordinate Mn(2+). The active site involves Arg-337.

It belongs to the peptidase M17 family. The cofactor is Mn(2+).

It is found in the cytoplasm. The enzyme catalyses Release of an N-terminal amino acid, Xaa-|-Yaa-, in which Xaa is preferably Leu, but may be other amino acids including Pro although not Arg or Lys, and Yaa may be Pro. Amino acid amides and methyl esters are also readily hydrolyzed, but rates on arylamides are exceedingly low.. The catalysed reaction is Release of an N-terminal amino acid, preferentially leucine, but not glutamic or aspartic acids.. Its function is as follows. Presumably involved in the processing and regular turnover of intracellular proteins. Catalyzes the removal of unsubstituted N-terminal amino acids from various peptides. The sequence is that of Probable cytosol aminopeptidase from Albidiferax ferrireducens (strain ATCC BAA-621 / DSM 15236 / T118) (Rhodoferax ferrireducens).